Consider the following 394-residue polypeptide: MDSTALKVALGCIAIRLAVNSLFPSLQQQLDQSVEFSTPVTSFRSLQEGIYLLRNNIQVYNHGVVHHPPILIFFLSLFNSDRLISLIYALIDGLIAYQLTEVTKAFKNLKLKVWLPGLLYAVNPLTLLSCISRSSIIFTNFAISSSLYCILAEGNVLLSSVMISISGYLSVYPILLLIPLLGMLKSWRQRILSAIVSILSLLILLLFSYSILGSQSWSFLTQVYGSIITFEKVFPNLGLWWYFFIEMFDTFIPFFKAVFNIFIAVFITPFTLRYHKQPFYAFILCIGWIVLTKPYPSLGDAGFFFSFLPFFTPLFGYLRYPIISALLFLHAIVLAPIFYHLWVVLGSGNSNFFYAISLVYALAIASILVDLNWAMLRIEYDNGIPNFKLKVTQI.

Over 1–135 (MDSTALKVAL…TLLSCISRSS (135 aa)) the chain is Cytoplasmic. The helical transmembrane segment at 136-156 (IIFTNFAISSSLYCILAEGNV) threads the bilayer. Topologically, residues 157–160 (LLSS) are lumenal. The chain crosses the membrane as a helical span at residues 161–181 (VMISISGYLSVYPILLLIPLL). Topologically, residues 182–190 (GMLKSWRQR) are cytoplasmic. Residues 191–211 (ILSAIVSILSLLILLLFSYSI) traverse the membrane as a helical segment. The Lumenal segment spans residues 212 to 224 (LGSQSWSFLTQVY). Residues 225-245 (GSIITFEKVFPNLGLWWYFFI) traverse the membrane as a helical segment. The may be involved in recognition of long-chain fatty acids in GPI stretch occupies residues 235-255 (PNLGLWWYFFIEMFDTFIPFF). Residues 246–250 (EMFDT) lie on the Cytoplasmic side of the membrane. The helical transmembrane segment at 251-271 (FIPFFKAVFNIFIAVFITPFT) threads the bilayer. The Lumenal segment spans residues 272–297 (LRYHKQPFYAFILCIGWIVLTKPYPS). Residues 298 to 318 (LGDAGFFFSFLPFFTPLFGYL) traverse the membrane as a helical segment. Residues 319 to 324 (RYPIIS) lie on the Cytoplasmic side of the membrane. Residues 325–345 (ALLFLHAIVLAPIFYHLWVVL) form a helical membrane-spanning segment. At 346–351 (GSGNSN) the chain is on the lumenal side. Residues 352-372 (FFYAISLVYALAIASILVDLN) traverse the membrane as a helical segment. At 373–394 (WAMLRIEYDNGIPNFKLKVTQI) the chain is on the cytoplasmic side.

It belongs to the PIGU family. As to quaternary structure, forms a complex with GPI16, GPI17, GPI8 and GAA1.

It is found in the endoplasmic reticulum membrane. The protein operates within glycolipid biosynthesis; glycosylphosphatidylinositol-anchor biosynthesis. Functionally, component of the GPI transamidase complex. May be involved in the recognition of either the GPI attachment signal or the lipid portion of GPI. In Saccharomyces cerevisiae (strain ATCC 204508 / S288c) (Baker's yeast), this protein is GPI transamidase component GAB1 (GAB1).